Consider the following 109-residue polypeptide: Large ribosomal subunit protein P1A (109 aa).

Residues 69-84 (APVAGGAAAPAAADGE) show a composition bias toward low complexity. Residues 69-109 (APVAGGAAAPAAADGEAPAEEKEEAKEEEESDEDMGFGLFD) form a disordered region. The span at 94–103 (KEEEESDEDM) shows a compositional bias: acidic residues.

The protein belongs to the eukaryotic ribosomal protein P1/P2 family. Component of the large ribosomal subunit (LSU). Mature yeast ribosomes consist of a small (40S) and a large (60S) subunit. The 40S small subunit contains 1 molecule of ribosomal RNA (18S rRNA) and at least 33 different proteins. The large 60S subunit contains 3 rRNA molecules (25S, 5.8S and 5S rRNA) and at least 46 different proteins. The acidic ribosomal P-proteins form the stalk structure of the 60S subunit. They are organized as a pentameric complex in which uL10/P0 interacts with 2 heterodimers of P1 and P2 proteins.

It localises to the cytoplasm. Component of the ribosome, a large ribonucleoprotein complex responsible for the synthesis of proteins in the cell. The small ribosomal subunit (SSU) binds messenger RNAs (mRNAs) and translates the encoded message by selecting cognate aminoacyl-transfer RNA (tRNA) molecules. The large subunit (LSU) contains the ribosomal catalytic site termed the peptidyl transferase center (PTC), which catalyzes the formation of peptide bonds, thereby polymerizing the amino acids delivered by tRNAs into a polypeptide chain. The nascent polypeptides leave the ribosome through a tunnel in the LSU and interact with protein factors that function in enzymatic processing, targeting, and the membrane insertion of nascent chains at the exit of the ribosomal tunnel. The sequence is that of Large ribosomal subunit protein P1A (rpp101) from Schizosaccharomyces pombe (strain 972 / ATCC 24843) (Fission yeast).